We begin with the raw amino-acid sequence, 333 residues long: Phosphate acyltransferase (333 aa).

It belongs to the PlsX family. As to quaternary structure, homodimer. Probably interacts with PlsY.

The protein resides in the cytoplasm. It carries out the reaction a fatty acyl-[ACP] + phosphate = an acyl phosphate + holo-[ACP]. The protein operates within lipid metabolism; phospholipid metabolism. Functionally, catalyzes the reversible formation of acyl-phosphate (acyl-PO(4)) from acyl-[acyl-carrier-protein] (acyl-ACP). This enzyme utilizes acyl-ACP as fatty acyl donor, but not acyl-CoA. The protein is Phosphate acyltransferase of Lactobacillus gasseri (strain ATCC 33323 / DSM 20243 / BCRC 14619 / CIP 102991 / JCM 1131 / KCTC 3163 / NCIMB 11718 / NCTC 13722 / AM63).